The following is a 407-amino-acid chain: P2X receptor D (407 aa).

At 1–22 (MDWDNIFSYNTAKIVTIKDRRL) the chain is on the cytoplasmic side. Residues 23-43 (GGLHIIFMVLIIVYIVIYSTI) traverse the membrane as a helical segment. The Lumenal portion of the chain corresponds to 44–300 (YKKGYLLTET…IQNGEIGSFN (257 aa)). Residues 283 to 296 (RHGIRLIFIQNGEI) form a pore-forming motif region. The helical transmembrane segment at 301–321 (FQALLLTFVSGLGLLAISTVL) threads the bilayer. The Cytoplasmic portion of the chain corresponds to 322-407 (VDQLAIRFLP…QNIQNNNIIL (86 aa)). The disordered stretch occupies residues 371 to 394 (KNNENNNNNDDYNDDDNEIFDDNN). Acidic residues predominate over residues 381-391 (DYNDDDNEIFD).

Belongs to the P2X receptor family.

It localises to the contractile vacuole membrane. In terms of biological role, P2X receptors are ligand-gated ion channels that play a role in intracellular calcium signaling. ATP does not evoke inward currents in p2xD. Not essential for osmoregulation. This is P2X receptor D (p2xD) from Dictyostelium discoideum (Social amoeba).